A 519-amino-acid polypeptide reads, in one-letter code: ATP synthase subunit alpha (519 aa).

An ATP-binding site is contributed by 174-181 (GDRQTGKT).

The protein belongs to the ATPase alpha/beta chains family. In terms of assembly, F-type ATPases have 2 components, CF(1) - the catalytic core - and CF(0) - the membrane proton channel. CF(1) has five subunits: alpha(3), beta(3), gamma(1), delta(1), epsilon(1). CF(0) has three main subunits: a(1), b(2) and c(9-12). The alpha and beta chains form an alternating ring which encloses part of the gamma chain. CF(1) is attached to CF(0) by a central stalk formed by the gamma and epsilon chains, while a peripheral stalk is formed by the delta and b chains.

It is found in the cell inner membrane. The catalysed reaction is ATP + H2O + 4 H(+)(in) = ADP + phosphate + 5 H(+)(out). Produces ATP from ADP in the presence of a proton gradient across the membrane. The alpha chain is a regulatory subunit. This is ATP synthase subunit alpha from Paracidovorax citrulli (strain AAC00-1) (Acidovorax citrulli).